Consider the following 359-residue polypeptide: Phospho-N-acetylmuramoyl-pentapeptide-transferase (359 aa).

Helical transmembrane passes span 3–23 (QILI…PALI), 55–75 (VAII…GLAF), 80–100 (ISAS…VGFL), 117–137 (TAKT…ALGF), 156–176 (IATV…VVSA), 187–207 (LDGL…LITF), 231–251 (LAIV…WNAA), 255–275 (IFMG…ISVT), 280–300 (ILAV…VLQI), and 334–354 (FWLL…GEWL).

Belongs to the glycosyltransferase 4 family. MraY subfamily. Requires Mg(2+) as cofactor.

It localises to the cell membrane. The catalysed reaction is UDP-N-acetyl-alpha-D-muramoyl-L-alanyl-gamma-D-glutamyl-meso-2,6-diaminopimeloyl-D-alanyl-D-alanine + di-trans,octa-cis-undecaprenyl phosphate = di-trans,octa-cis-undecaprenyl diphospho-N-acetyl-alpha-D-muramoyl-L-alanyl-D-glutamyl-meso-2,6-diaminopimeloyl-D-alanyl-D-alanine + UMP. Its pathway is cell wall biogenesis; peptidoglycan biosynthesis. Its function is as follows. Catalyzes the initial step of the lipid cycle reactions in the biosynthesis of the cell wall peptidoglycan: transfers peptidoglycan precursor phospho-MurNAc-pentapeptide from UDP-MurNAc-pentapeptide onto the lipid carrier undecaprenyl phosphate, yielding undecaprenyl-pyrophosphoryl-MurNAc-pentapeptide, known as lipid I. This chain is Phospho-N-acetylmuramoyl-pentapeptide-transferase, found in Mycolicibacterium paratuberculosis (strain ATCC BAA-968 / K-10) (Mycobacterium paratuberculosis).